We begin with the raw amino-acid sequence, 369 residues long: MAAKKLLILPGDGIGVEVMAQVRRIIDWMGRKRKIEFEITEGLLGGAAYDVHGTPYPAETLEAALAADAVLLGAVGGPKWDDLPFDKKPERGLLGIRKDMGLFANLRPATVLEALADASTLKAEVVSGLDIMILRELTGGLYFGQPRGIDTLPDGTRKGYNTLVYTTPEIQRIGRVAFDLARKRNKKLCSVDKANVLECTVLWREEMIKLQKEEFPDVELTHMYVDNAAMQLVRNPKQFDVMVTENMFGDILSDCAAMLTGSLGMLPSASLGEADAQGKRKALYEPVHGSAPDIAGKDMANPLATIMSFAMCLRYSFDMAAEADLIETAVKNVLKGGLRTADIMQPGKAKVSTTVMGEAVVRELDKLNA.

Position 77–90 (77–90 (GPKWDDLPFDKKPE)) interacts with NAD(+). Substrate-binding residues include Arg-97, Arg-107, Arg-135, and Asp-226. Residues Asp-226, Asp-250, and Asp-254 each coordinate Mg(2+). 289-301 (GSAPDIAGKDMAN) is an NAD(+) binding site.

Belongs to the isocitrate and isopropylmalate dehydrogenases family. LeuB type 1 subfamily. Homodimer. Mg(2+) serves as cofactor. Mn(2+) is required as a cofactor.

It localises to the cytoplasm. It carries out the reaction (2R,3S)-3-isopropylmalate + NAD(+) = 4-methyl-2-oxopentanoate + CO2 + NADH. It functions in the pathway amino-acid biosynthesis; L-leucine biosynthesis; L-leucine from 3-methyl-2-oxobutanoate: step 3/4. Functionally, catalyzes the oxidation of 3-carboxy-2-hydroxy-4-methylpentanoate (3-isopropylmalate) to 3-carboxy-4-methyl-2-oxopentanoate. The product decarboxylates to 4-methyl-2 oxopentanoate. This Paramagnetospirillum magneticum (strain ATCC 700264 / AMB-1) (Magnetospirillum magneticum) protein is 3-isopropylmalate dehydrogenase.